The following is a 267-amino-acid chain: Orotidine 5'-phosphate decarboxylase (267 aa).

N-acetylserine is present on S2. Substrate contacts are provided by residues D37, K59–H61, and D91–T100. Catalysis depends on K93, which acts as the Proton donor. Residues K93 and K209 each participate in a glycyl lysine isopeptide (Lys-Gly) (interchain with G-Cter in ubiquitin) cross-link. Residues Y217 and R235 each coordinate substrate. A Glycyl lysine isopeptide (Lys-Gly) (interchain with G-Cter in ubiquitin) cross-link involves residue K253.

Belongs to the OMP decarboxylase family.

It carries out the reaction orotidine 5'-phosphate + H(+) = UMP + CO2. It participates in pyrimidine metabolism; UMP biosynthesis via de novo pathway; UMP from orotate: step 2/2. The polypeptide is Orotidine 5'-phosphate decarboxylase (URA3) (Saccharomyces cerevisiae (strain ATCC 204508 / S288c) (Baker's yeast)).